The following is a 386-amino-acid chain: Galactokinase (386 aa).

35–38 (EHTD) serves as a coordination point for substrate. ATP contacts are provided by residues Ser-69 and 125 to 131 (GAGLSSS). Mg(2+) is bound by residues Ser-131 and Glu-163. Asp-175 (proton acceptor) is an active-site residue. A substrate-binding site is contributed by Tyr-224.

This sequence belongs to the GHMP kinase family. GalK subfamily.

The protein localises to the cytoplasm. It catalyses the reaction alpha-D-galactose + ATP = alpha-D-galactose 1-phosphate + ADP + H(+). It participates in carbohydrate metabolism; galactose metabolism. Catalyzes the transfer of the gamma-phosphate of ATP to D-galactose to form alpha-D-galactose-1-phosphate (Gal-1-P). This Vibrio vulnificus (strain CMCP6) protein is Galactokinase.